Consider the following 65-residue polypeptide: Putative beta-neurotoxin RjAa8 (65 aa).

One can recognise an LCN-type CS-alpha/beta domain in the interval 1 to 64 (KEGYPMGRDG…VWDSSTNKCG (64 aa)). 4 disulfides stabilise this stretch: Cys11-Cys63, Cys15-Cys37, Cys22-Cys44, and Cys26-Cys46.

This sequence belongs to the long (4 C-C) scorpion toxin superfamily. Sodium channel inhibitor family. Beta subfamily. Expressed by the venom gland.

It is found in the secreted. Its function is as follows. Beta toxins bind voltage-independently at site-4 of sodium channels (Nav) and shift the voltage of activation toward more negative potentials thereby affecting sodium channel activation and promoting spontaneous and repetitive firing. The sequence is that of Putative beta-neurotoxin RjAa8 from Rhopalurus junceus (Caribbean blue scorpion).